The sequence spans 92 residues: Conotoxin Mr15.3 (92 aa).

Residues Met-1–Phe-20 form the signal peptide. A propeptide spanning residues Asp-21–Arg-53 is cleaved from the precursor.

This sequence belongs to the conotoxin N superfamily. Post-translationally, contains 4 disulfide bonds. In terms of tissue distribution, expressed by the venom duct.

It is found in the secreted. This chain is Conotoxin Mr15.3, found in Conus marmoreus (Marble cone).